Here is a 1053-residue protein sequence, read N- to C-terminus: Protein CLEC16A (1053 aa).

One can recognise an FPL domain in the interval 51 to 198; it reads IRSITEILIW…AVRTITLNVY (148 aa). 3 disordered regions span residues 375–434, 452–471, and 892–983; these read SLEM…GESE, STSV…AATC, and SSPS…SPSL. A compositionally biased stretch (basic residues) spans 381–392; sequence HKGKRRVQKRPN. Positions 892–938 are enriched in low complexity; the sequence is SSPSLSSQSPPSASGSPSGSGSTSHCDSGGTSSSSTPSTAQSPADAP.

It belongs to the CLEC16A/gop-1 family. Interacts with RNF41/NRDP1. Almost exclusively expressed in immune cells, including dendritic cells, B-lymphocytes and natural killer cells.

Its subcellular location is the endosome membrane. It localises to the lysosome membrane. Its function is as follows. Regulator of mitophagy through the upstream regulation of the RNF41/NRDP1-PRKN pathway. Mitophagy is a selective form of autophagy necessary for mitochondrial quality control. The RNF41/NRDP1-PRKN pathway regulates autophagosome-lysosome fusion during late mitophagy. May protect RNF41/NRDP1 from proteasomal degradation, RNF41/NRDP1 which regulates proteasomal degradation of PRKN. Plays a key role in beta cells functions by regulating mitophagy/autophagy and mitochondrial health. The sequence is that of Protein CLEC16A from Homo sapiens (Human).